The following is a 649-amino-acid chain: DNA topoisomerase 3 (649 aa).

The Toprim domain maps to 1–134 (MRLFIAEKPS…KRQQVRRCLI (134 aa)). Positions 7, 103, and 105 each coordinate Mg(2+). The Topo IA-type catalytic domain maps to 155–603 (FVPLCVSALA…PLVGTLYQLI (449 aa)). The interaction with DNA stretch occupies residues 194–199 (SVGRVQ). The active-site O-(5'-phospho-DNA)-tyrosine intermediate is the Tyr328. A disordered region spans residues 614-649 (FRGIVAPGGGDKKKSAPRKRAGKKSPPAAETGRQTE).

This sequence belongs to the type IA topoisomerase family. The cofactor is Mg(2+).

The catalysed reaction is ATP-independent breakage of single-stranded DNA, followed by passage and rejoining.. Releases the supercoiling and torsional tension of DNA, which is introduced during the DNA replication and transcription, by transiently cleaving and rejoining one strand of the DNA duplex. Introduces a single-strand break via transesterification at a target site in duplex DNA. The scissile phosphodiester is attacked by the catalytic tyrosine of the enzyme, resulting in the formation of a DNA-(5'-phosphotyrosyl)-enzyme intermediate and the expulsion of a 3'-OH DNA strand. The free DNA strand then undergoes passage around the unbroken strand, thus removing DNA supercoils. Finally, in the religation step, the DNA 3'-OH attacks the covalent intermediate to expel the active-site tyrosine and restore the DNA phosphodiester backbone. This is DNA topoisomerase 3 from Salmonella typhimurium (strain LT2 / SGSC1412 / ATCC 700720).